The following is a 167-amino-acid chain: HTH-type transcriptional repressor YetL (167 aa).

In terms of domain architecture, HTH marR-type spans 26 to 160 (SLELFLSLFD…FVKMLGDLFE (135 aa)). Residues 74 to 97 (PTELAKRSNVTKATITGLLDGLAR) constitute a DNA-binding region (H-T-H motif).

As to quaternary structure, homodimer. The N- and C-terminal helices from both subunits stabilize YetL dimer via extensive intersubunit interactions.

Binding to the yetM cis sequence is clearly inhibited by kaempferol, morin, apigenin and luteolin, slightly inhibited by quercetin and galangin, but no inhibition is observed with the other flavonoids. Flavonoid binding may induce conformational changes and modulate interaction with DNA. Its function is as follows. Negatively regulates yetM expression and its own expression. Binds specifically to corresponding single sites in the divergent yetL and yetM promoter regions, with higher affinity to the yetM region. Recognizes a 28-mer operator of double-stranded DNA that contains a palindromic sequence. In Bacillus subtilis (strain 168), this protein is HTH-type transcriptional repressor YetL (yetL).